The following is a 233-amino-acid chain: tRNA (guanine-N(1)-)-methyltransferase (233 aa).

Residues glycine 110 and 130–135 (IGDYVM) contribute to the S-adenosyl-L-methionine site.

The protein belongs to the RNA methyltransferase TrmD family. In terms of assembly, homodimer.

The protein resides in the cytoplasm. It carries out the reaction guanosine(37) in tRNA + S-adenosyl-L-methionine = N(1)-methylguanosine(37) in tRNA + S-adenosyl-L-homocysteine + H(+). In terms of biological role, specifically methylates guanosine-37 in various tRNAs. This Finegoldia magna (strain ATCC 29328 / DSM 20472 / WAL 2508) (Peptostreptococcus magnus) protein is tRNA (guanine-N(1)-)-methyltransferase.